We begin with the raw amino-acid sequence, 425 residues long: Kynurenine/alpha-aminoadipate aminotransferase, mitochondrial (425 aa).

The transit peptide at 1-29 (MNYSRFLTATSLARKTSPIRATVEIMSRA) directs the protein to the mitochondrion. Arginine 20 serves as a coordination point for substrate. Residue serine 40 is modified to Phosphoserine. Positions 74 and 142 each coordinate substrate. Lysine 172 carries the post-translational modification N6-succinyllysine. The residue at position 179 (lysine 179) is an N6-acetyllysine. Basic and acidic residues predominate over residues 179-188 (KPEDSKDPTK). The tract at residues 179-208 (KPEDSKDPTKRTPKFLYTIPNGNNPTGNSL) is disordered. Residues 198–208 (PNGNNPTGNSL) show a composition bias toward polar residues. Residue asparagine 202 participates in substrate binding. An N6-(pyridoxal phosphate)lysine; alternate modification is found at lysine 263. N6-acetyllysine; alternate occurs at positions 263 and 339. N6-succinyllysine; alternate is present on residues lysine 263 and lysine 339. Lysine 351 is subject to N6-acetyllysine. Lysine 367 bears the N6-acetyllysine; alternate mark. At lysine 367 the chain carries N6-succinyllysine; alternate. Arginine 399 lines the substrate pocket. At lysine 422 the chain carries N6-acetyllysine.

This sequence belongs to the class-I pyridoxal-phosphate-dependent aminotransferase family. As to quaternary structure, homodimer. Pyridoxal 5'-phosphate serves as cofactor. The N-terminus is blocked.

The protein resides in the mitochondrion. It carries out the reaction L-kynurenine + 2-oxoglutarate = kynurenate + L-glutamate + H2O. The catalysed reaction is L-2-aminoadipate + 2-oxoglutarate = 2-oxoadipate + L-glutamate. It catalyses the reaction glycine + 2-oxoglutarate = glyoxylate + L-glutamate. The enzyme catalyses L-kynurenine + glyoxylate = kynurenate + glycine + H2O. It carries out the reaction 3-hydroxy-L-kynurenine + glyoxylate = xanthurenate + glycine + H2O. The catalysed reaction is 2-oxohexanoate + L-kynurenine = L-2-aminohexanoate + kynurenate + H2O. It catalyses the reaction 3-phenylpyruvate + L-kynurenine = kynurenate + L-phenylalanine + H2O. The enzyme catalyses 4-methylsulfanyl-2-oxobutanoate + L-kynurenine = kynurenate + L-methionine + H2O. It carries out the reaction 2-oxo-3-sulfanylpropanoate + L-kynurenine = kynurenate + L-cysteine + H2O. The catalysed reaction is indole-3-pyruvate + L-kynurenine = kynurenate + L-tryptophan + H2O. It catalyses the reaction 2-oxopentanoate + L-kynurenine = L-2-aminopentanoate + kynurenate + H2O. The enzyme catalyses 4-methyl-2-oxopentanoate + L-kynurenine = kynurenate + L-leucine + H2O. It carries out the reaction glyoxylate + L-methionine = 4-methylsulfanyl-2-oxobutanoate + glycine. The catalysed reaction is L-2-aminoadipate + glyoxylate = 2-oxoadipate + glycine. It catalyses the reaction L-tyrosine + glyoxylate = 3-(4-hydroxyphenyl)pyruvate + glycine. The enzyme catalyses glyoxylate + L-phenylalanine = 3-phenylpyruvate + glycine. It carries out the reaction L-tryptophan + glyoxylate = indole-3-pyruvate + glycine. The catalysed reaction is L-leucine + glyoxylate = 4-methyl-2-oxopentanoate + glycine. It catalyses the reaction 2-oxobutanoate + L-kynurenine = (2S)-2-aminobutanoate + kynurenate + H2O. The enzyme catalyses 2-oxoadipate + L-kynurenine = L-2-aminoadipate + kynurenate + H2O. It carries out the reaction 2-oxoadipate + L-kynurenine = 4-(2-aminophenyl)-2,4-dioxobutanoate + L-2-aminoadipate. The protein operates within amino-acid degradation; L-lysine degradation via saccharopine pathway; glutaryl-CoA from L-lysine: step 4/6. Its function is as follows. Transaminase with broad substrate specificity. Has transaminase activity towards aminoadipate, kynurenine, methionine and glutamate. Shows activity also towards tryptophan, aspartate and hydroxykynurenine. Accepts a variety of oxo-acids as amino-group acceptors, with a preference for 2-oxoglutarate, 2-oxocaproic acid, phenylpyruvate and alpha-oxo-gamma-methiol butyric acid. Can also use glyoxylate as amino-group acceptor (in vitro). The protein is Kynurenine/alpha-aminoadipate aminotransferase, mitochondrial of Rattus norvegicus (Rat).